The chain runs to 191 residues: Leucyl/phenylalanyl-tRNA--protein transferase (191 aa).

The protein belongs to the L/F-transferase family.

Its subcellular location is the cytoplasm. The enzyme catalyses N-terminal L-lysyl-[protein] + L-leucyl-tRNA(Leu) = N-terminal L-leucyl-L-lysyl-[protein] + tRNA(Leu) + H(+). It catalyses the reaction N-terminal L-arginyl-[protein] + L-leucyl-tRNA(Leu) = N-terminal L-leucyl-L-arginyl-[protein] + tRNA(Leu) + H(+). The catalysed reaction is L-phenylalanyl-tRNA(Phe) + an N-terminal L-alpha-aminoacyl-[protein] = an N-terminal L-phenylalanyl-L-alpha-aminoacyl-[protein] + tRNA(Phe). Its function is as follows. Functions in the N-end rule pathway of protein degradation where it conjugates Leu, Phe and, less efficiently, Met from aminoacyl-tRNAs to the N-termini of proteins containing an N-terminal arginine or lysine. The protein is Leucyl/phenylalanyl-tRNA--protein transferase of Nostoc punctiforme (strain ATCC 29133 / PCC 73102).